The following is a 158-amino-acid chain: MRIGHGFDVHKFGGEGPVIIGGVSVPYEQGLIAHSDGDVALHALCDALLGAIAEGDIGRHFPDTDDKWKGADSRALLRDVYRRVKEKGFALGNADVTIIAQAPKMAPYIQAMCNAIAEDLETELDNVNVKATTSERLGFTGRKEGIACEAVVLLVKAS.

Residues Asp-8 and His-10 each contribute to the a divalent metal cation site. 4-CDP-2-C-methyl-D-erythritol 2-phosphate is bound by residues 8 to 10 (DVH) and 34 to 35 (HS). Residue His-42 coordinates a divalent metal cation. Residues 56 to 58 (DIG), 61 to 65 (FPDTD), 100 to 106 (AQAPKMA), 132 to 135 (TTSE), Phe-139, and Arg-142 contribute to the 4-CDP-2-C-methyl-D-erythritol 2-phosphate site.

This sequence belongs to the IspF family. As to quaternary structure, homotrimer. Requires a divalent metal cation as cofactor.

The enzyme catalyses 4-CDP-2-C-methyl-D-erythritol 2-phosphate = 2-C-methyl-D-erythritol 2,4-cyclic diphosphate + CMP. Its pathway is isoprenoid biosynthesis; isopentenyl diphosphate biosynthesis via DXP pathway; isopentenyl diphosphate from 1-deoxy-D-xylulose 5-phosphate: step 4/6. Involved in the biosynthesis of isopentenyl diphosphate (IPP) and dimethylallyl diphosphate (DMAPP), two major building blocks of isoprenoid compounds. Catalyzes the conversion of 4-diphosphocytidyl-2-C-methyl-D-erythritol 2-phosphate (CDP-ME2P) to 2-C-methyl-D-erythritol 2,4-cyclodiphosphate (ME-CPP) with a corresponding release of cytidine 5-monophosphate (CMP). The protein is 2-C-methyl-D-erythritol 2,4-cyclodiphosphate synthase of Aliivibrio fischeri (strain ATCC 700601 / ES114) (Vibrio fischeri).